The following is a 227-amino-acid chain: Glutathione S-transferase U27 (227 aa).

Residues 4 to 84 (EEVVVLNFWP…YIDEVWKDDK (81 aa)) enclose the GST N-terminal domain. Glutathione-binding positions include 14–15 (SM), 41–42 (QK), 55–56 (KI), and 68–69 (ES). A GST C-terminal domain is found at 92–217 (DPYQKSQCRF…LKIFDRVTQI (126 aa)).

This sequence belongs to the GST superfamily. Tau family.

It is found in the cytoplasm. Its subcellular location is the cytosol. It catalyses the reaction RX + glutathione = an S-substituted glutathione + a halide anion + H(+). Functionally, may be involved in the conjugation of reduced glutathione to a wide number of exogenous and endogenous hydrophobic electrophiles and have a detoxification role against certain herbicides. In Arabidopsis thaliana (Mouse-ear cress), this protein is Glutathione S-transferase U27 (GSTU27).